A 256-amino-acid polypeptide reads, in one-letter code: PGL/p-HBAD biosynthesis glycosyltransferase Mb2981 (256 aa).

This sequence belongs to the glycosyltransferase 2 family.

Functionally, involved in glycosylation steps downstream of mono-O-methyl-glycosyl-p-hydroxybenzoic acid derivative (p-HBAD I) and 2-O-methyl-rhamnosyl-phenolphthiocerol dimycocerosate (mycoside B) during the p-hydroxybenzoic acid derivatives (p-HBAD) and glycosylated phenolphthiocerol dimycocerosates (PGL) biosynthesis. The protein is PGL/p-HBAD biosynthesis glycosyltransferase Mb2981 of Mycobacterium bovis (strain ATCC BAA-935 / AF2122/97).